The following is a 145-amino-acid chain: uncharacterized protein (145 aa).

The protein belongs to the SAP18 family.

It localises to the cytoplasm. It is found in the nucleus. This is an uncharacterized protein from Schizosaccharomyces pombe (strain 972 / ATCC 24843) (Fission yeast).